A 1580-amino-acid polypeptide reads, in one-letter code: Pentafunctional AROM polypeptide (1580 aa).

The tract at residues 1 to 381 is 3-dehydroquinate synthase; the sequence is MATPTVIKIL…HEQKASVVSN (381 aa). NAD(+) is bound by residues 44–46, 81–84, 114–116, and Asp119; these read DTT, EVSK, and GGV. Residue Arg130 participates in 7-phospho-2-dehydro-3-deoxy-D-arabino-heptonate binding. NAD(+) is bound at residue 139-140; the sequence is TT. 7-phospho-2-dehydro-3-deoxy-D-arabino-heptonate is bound by residues Asp146 and Lys152. Lys161 contributes to the NAD(+) binding site. Asn162 is a 7-phospho-2-dehydro-3-deoxy-D-arabino-heptonate binding site. Residues 179–182 and Asn190 contribute to the NAD(+) site; that span reads FLNT. A Zn(2+)-binding site is contributed by Glu194. Lys247 is a 7-phospho-2-dehydro-3-deoxy-D-arabino-heptonate binding site. Glu257 serves as the catalytic Proton acceptor; for 3-dehydroquinate synthase activity. 7-phospho-2-dehydro-3-deoxy-D-arabino-heptonate contacts are provided by residues 261–265 and His268; that span reads RNLLN. Zn(2+) is bound at residue His268. His272 acts as the Proton acceptor; for 3-dehydroquinate synthase activity in catalysis. His284 and Lys353 together coordinate 7-phospho-2-dehydro-3-deoxy-D-arabino-heptonate. Residue His284 coordinates Zn(2+). The segment at 394–838 is EPSP synthase; that stretch reads VSPGVPHALE…WDTLAQLFKA (445 aa). The For EPSP synthase activity role is filled by Cys820. The tract at residues 857–1048 is shikimate kinase; the sequence is ASLFIIGMRG…KKKPQSFFVS (192 aa). 863–870 is an ATP binding site; that stretch reads GMRGAGKT. A 3-dehydroquinase region spans residues 1049–1269; it reads LTLPDLRPSV…AAPGQLSAKE (221 aa). Residue His1172 is the Proton acceptor; for 3-dehydroquinate dehydratase activity of the active site. Lys1200 acts as the Schiff-base intermediate with substrate; for 3-dehydroquinate dehydratase activity in catalysis. The segment at 1282–1580 is shikimate dehydrogenase; the sequence is SKKFAIVGKP…AAVMNADADI (299 aa).

It in the N-terminal section; belongs to the sugar phosphate cyclases superfamily. Dehydroquinate synthase family. In the 2nd section; belongs to the EPSP synthase family. The protein in the 3rd section; belongs to the shikimate kinase family. This sequence in the 4th section; belongs to the type-I 3-dehydroquinase family. It in the C-terminal section; belongs to the shikimate dehydrogenase family. As to quaternary structure, homodimer. It depends on Zn(2+) as a cofactor.

The protein localises to the cytoplasm. It catalyses the reaction 7-phospho-2-dehydro-3-deoxy-D-arabino-heptonate = 3-dehydroquinate + phosphate. The catalysed reaction is 3-dehydroquinate = 3-dehydroshikimate + H2O. It carries out the reaction shikimate + NADP(+) = 3-dehydroshikimate + NADPH + H(+). The enzyme catalyses shikimate + ATP = 3-phosphoshikimate + ADP + H(+). It catalyses the reaction 3-phosphoshikimate + phosphoenolpyruvate = 5-O-(1-carboxyvinyl)-3-phosphoshikimate + phosphate. It participates in metabolic intermediate biosynthesis; chorismate biosynthesis; chorismate from D-erythrose 4-phosphate and phosphoenolpyruvate: step 2/7. Its pathway is metabolic intermediate biosynthesis; chorismate biosynthesis; chorismate from D-erythrose 4-phosphate and phosphoenolpyruvate: step 3/7. It functions in the pathway metabolic intermediate biosynthesis; chorismate biosynthesis; chorismate from D-erythrose 4-phosphate and phosphoenolpyruvate: step 4/7. The protein operates within metabolic intermediate biosynthesis; chorismate biosynthesis; chorismate from D-erythrose 4-phosphate and phosphoenolpyruvate: step 5/7. It participates in metabolic intermediate biosynthesis; chorismate biosynthesis; chorismate from D-erythrose 4-phosphate and phosphoenolpyruvate: step 6/7. The AROM polypeptide catalyzes 5 consecutive enzymatic reactions in prechorismate polyaromatic amino acid biosynthesis. The chain is Pentafunctional AROM polypeptide from Uncinocarpus reesii (strain UAMH 1704).